The chain runs to 136 residues: MKLHIFKSKIHRATVTNADLYYEGSITIDMDLVDLAGMMPNEKVQVVNNNNGARFETYIIRGKRGSGTIQLNGAAARLASIGDEIIIITYAEMEPEEAKDYKPTVVLVDKKNRPKKIFQLGEETTPEEAPSLEQRN.

Ser25 (schiff-base intermediate with substrate; via pyruvic acid) is an active-site residue. Ser25 is modified (pyruvic acid (Ser)). Position 57 (Thr57) interacts with substrate. Catalysis depends on Tyr58, which acts as the Proton donor. 73-75 (GAA) is a binding site for substrate. The segment at 117-136 (IFQLGEETTPEEAPSLEQRN) is disordered.

Belongs to the PanD family. Heterooctamer of four alpha and four beta subunits. Pyruvate is required as a cofactor. Is synthesized initially as an inactive proenzyme, which is activated by self-cleavage at a specific serine bond to produce a beta-subunit with a hydroxyl group at its C-terminus and an alpha-subunit with a pyruvoyl group at its N-terminus.

It localises to the cytoplasm. It catalyses the reaction L-aspartate + H(+) = beta-alanine + CO2. The protein operates within cofactor biosynthesis; (R)-pantothenate biosynthesis; beta-alanine from L-aspartate: step 1/1. Functionally, catalyzes the pyruvoyl-dependent decarboxylation of aspartate to produce beta-alanine. The polypeptide is Aspartate 1-decarboxylase (Chloroherpeton thalassium (strain ATCC 35110 / GB-78)).